The following is a 302-amino-acid chain: Succinate--CoA ligase [ADP-forming] subunit alpha (302 aa).

Residues 17–20 (TGST), Lys43, and 96–98 (ITE) contribute to the CoA site. Residue Tyr159 coordinates substrate. His247 acts as the Tele-phosphohistidine intermediate in catalysis.

This sequence belongs to the succinate/malate CoA ligase alpha subunit family. In terms of assembly, heterotetramer of two alpha and two beta subunits.

It carries out the reaction succinate + ATP + CoA = succinyl-CoA + ADP + phosphate. It catalyses the reaction GTP + succinate + CoA = succinyl-CoA + GDP + phosphate. Its pathway is carbohydrate metabolism; tricarboxylic acid cycle; succinate from succinyl-CoA (ligase route): step 1/1. In terms of biological role, succinyl-CoA synthetase functions in the citric acid cycle (TCA), coupling the hydrolysis of succinyl-CoA to the synthesis of either ATP or GTP and thus represents the only step of substrate-level phosphorylation in the TCA. The alpha subunit of the enzyme binds the substrates coenzyme A and phosphate, while succinate binding and nucleotide specificity is provided by the beta subunit. The chain is Succinate--CoA ligase [ADP-forming] subunit alpha from Staphylococcus epidermidis (strain ATCC 12228 / FDA PCI 1200).